The sequence spans 357 residues: Low-salt glycan biosynthesis nucleotidyltransferase Agl11 (357 aa).

Positions 108 and 221 each coordinate Mg(2+).

This sequence belongs to the glucose-1-phosphate thymidylyltransferase family. The cofactor is Mg(2+).

Its pathway is protein modification; protein glycosylation. It functions in the pathway cell surface structure biogenesis; S-layer biogenesis. Its function is as follows. Nucleotidyltransferase involved in N-glycan biosynthetic pathway that takes place under low-salt conditions (1.75 M instead of 3.4 M). Participates in the formation of the tetrasaccharide present at 'Asn-532' of S-layer glycoprotein Csg, consisting of a sulfated hexose, 2 hexoses and rhamnose. Involved in the addition of final rhamnose (sugar 4) of the tetrasaccharide on the dolichol phosphate carrier. In Haloferax volcanii (strain ATCC 29605 / DSM 3757 / JCM 8879 / NBRC 14742 / NCIMB 2012 / VKM B-1768 / DS2) (Halobacterium volcanii), this protein is Low-salt glycan biosynthesis nucleotidyltransferase Agl11 (agl11).